The primary structure comprises 60 residues: uncharacterized protein (60 aa).

This is an uncharacterized protein from Bacillus subtilis (strain 168).